The chain runs to 86 residues: Large ribosomal subunit protein bL31 (86 aa).

Residues 65 to 86 form a disordered region; sequence YGMASSDSSEQKDKSSEEKKES. A compositionally biased stretch (basic and acidic residues) spans 73–86; sequence SEQKDKSSEEKKES.

It belongs to the bacterial ribosomal protein bL31 family. Type A subfamily. Part of the 50S ribosomal subunit.

Binds the 23S rRNA. In Prochlorococcus marinus (strain NATL2A), this protein is Large ribosomal subunit protein bL31.